The chain runs to 142 residues: Large ribosomal subunit protein uL11 (142 aa).

The protein belongs to the universal ribosomal protein uL11 family. In terms of assembly, part of the ribosomal stalk of the 50S ribosomal subunit. Interacts with L10 and the large rRNA to form the base of the stalk. L10 forms an elongated spine to which L12 dimers bind in a sequential fashion forming a multimeric L10(L12)X complex. In terms of processing, one or more lysine residues are methylated.

In terms of biological role, forms part of the ribosomal stalk which helps the ribosome interact with GTP-bound translation factors. The protein is Large ribosomal subunit protein uL11 of Ruthia magnifica subsp. Calyptogena magnifica.